The following is a 989-amino-acid chain: MSDNDKPKLGMRAPLGIKRTVETSKVKQSFSHGRSNTVIVETKRRRVINKPGSGDAATAAETAKKQAEPVENTPNKDTAVTQTATKNETVATPAAAPAPAPAAAPKPVAAEATAQETSKAAPAAAQPVAEKEAAAPASAEAAKSAAIKVTDRGAKKTTEKNGANASGNRPSGNRSQDNRGRQGGRGSQNKNQTRSGGQPRQPRTLAHRDLASRQELQARLLREAEESRLQALEEARRREDRLKQEADLEEQRRIEEKRRLEAEAKVEAEKQAALKEKEKAEAKARAKAEKEAKAAQAKTAGAAEGEEKTRRPAKAAAPKAREERSESPRSPAPRRFTPVSPPRREAPRPAMRDRKGEDRRQSGKLTVTKALSGDEGGARARSLAALRRAREKDKRANQNRAQQVRQIRDVVVPEAITVQELANRMAERGADLVKALFKMGVAVTLTQTIDQDTAELLVTEFGHNIKRVSESDVEIDSSSDVDPEETLKSRPPVVTIMGHVDHGKTSLLDALRGSDVVRGEAGGITQHIGAYQVESPSGEKITLLDTPGHEAFSEMRARGANVTDIVIIVVAADDGLRPQTVEAIDHARAADVPIIIAINKMDKPEANPQRIREALLQYNVQVEAMGGDVQDVEISAAKKTGLDELIEKILLQAEMLELKANPDRAAEGTVVEAKLDRGRGPVATILVRRGTLKVGDIFVVGEFSGRVRAMTDAQGKNQKEAGPSMPVEVLGLSGVPQAGDTLTVVESEARAREVAAYRAEIALRKRTTAQPASLESMFSALKDKQAVEYPLLIKADTQGSVEAIAGALNKISNEDIRVRILHQGVGGITESDVSLAAASGAPIIGFHVRPNSKARDIARRDGVALKFYDVIYDLIDEIKAAMAGKLGPEYFETVVGKAEIREVFSAGKHGRAAGLLVLEGYIRQKLRARVLRNDVIIYNGSIASLRRFKDDVPEVRAGLECGITLEGSTDIKAGDIVETFEVEERARTL.

Disordered regions lie at residues 43–219 (KRRR…LQAR) and 234–379 (EARR…GGAR). Residues 72–87 (NTPNKDTAVTQTATKN) are compositionally biased toward polar residues. Positions 105–146 (PKPVAAEATAQETSKAAPAAAQPVAEKEAAAPASAEAAKSAA) are enriched in low complexity. The segment covering 149 to 159 (VTDRGAKKTTE) has biased composition (basic and acidic residues). Residues 160-171 (KNGANASGNRPS) are compositionally biased toward polar residues. The segment covering 234–293 (EARRREDRLKQEADLEEQRRIEEKRRLEAEAKVEAEKQAALKEKEKAEAKARAKAEKEAK) has biased composition (basic and acidic residues). Low complexity predominate over residues 294 to 303 (AAQAKTAGAA). Basic and acidic residues predominate over residues 342–361 (PRREAPRPAMRDRKGEDRRQ). The tr-type G domain occupies 489–659 (SRPPVVTIMG…LLQAEMLELK (171 aa)). Residues 498–505 (GHVDHGKT) are G1. 498–505 (GHVDHGKT) is a binding site for GTP. The G2 stretch occupies residues 523-527 (GITQH). The tract at residues 545 to 548 (DTPG) is G3. Residues 545–549 (DTPGH) and 599–602 (NKMD) each bind GTP. The interval 599 to 602 (NKMD) is G4. Residues 635 to 637 (SAA) are G5.

It belongs to the TRAFAC class translation factor GTPase superfamily. Classic translation factor GTPase family. IF-2 subfamily.

It localises to the cytoplasm. Functionally, one of the essential components for the initiation of protein synthesis. Protects formylmethionyl-tRNA from spontaneous hydrolysis and promotes its binding to the 30S ribosomal subunits. Also involved in the hydrolysis of GTP during the formation of the 70S ribosomal complex. The chain is Translation initiation factor IF-2 from Zymomonas mobilis subsp. mobilis (strain ATCC 31821 / ZM4 / CP4).